Reading from the N-terminus, the 369-residue chain is uncharacterized protein (369 aa).

Residue Lys184 is modified to N6-(pyridoxal phosphate)lysine.

It belongs to the class-V pyridoxal-phosphate-dependent aminotransferase family. Pyridoxal 5'-phosphate is required as a cofactor.

This is an uncharacterized protein from Helicobacter pylori (strain ATCC 700392 / 26695) (Campylobacter pylori).